Reading from the N-terminus, the 257-residue chain is Ditrans,polycis-undecaprenyl-diphosphate synthase ((2E,6E)-farnesyl-diphosphate specific) (257 aa).

Asp-23 is an active-site residue. A Mg(2+)-binding site is contributed by Asp-23. Residues 24–27, Trp-28, Arg-36, His-40, and 68–70 contribute to the substrate site; these read GNGR and SSE. Asn-71 (proton acceptor) is an active-site residue. Substrate contacts are provided by residues Trp-72, Arg-74, Arg-191, and 197-199; that span reads RIS. Position 210 (Glu-210) interacts with Mg(2+).

The protein belongs to the UPP synthase family. Homodimer. Mg(2+) is required as a cofactor.

The enzyme catalyses 8 isopentenyl diphosphate + (2E,6E)-farnesyl diphosphate = di-trans,octa-cis-undecaprenyl diphosphate + 8 diphosphate. Its function is as follows. Catalyzes the sequential condensation of isopentenyl diphosphate (IPP) with (2E,6E)-farnesyl diphosphate (E,E-FPP) to yield (2Z,6Z,10Z,14Z,18Z,22Z,26Z,30Z,34E,38E)-undecaprenyl diphosphate (di-trans,octa-cis-UPP). UPP is the precursor of glycosyl carrier lipid in the biosynthesis of bacterial cell wall polysaccharide components such as peptidoglycan and lipopolysaccharide. The protein is Ditrans,polycis-undecaprenyl-diphosphate synthase ((2E,6E)-farnesyl-diphosphate specific) of Xanthomonas axonopodis pv. citri (strain 306).